The chain runs to 129 residues: Large ribosomal subunit protein bL12 (129 aa).

Belongs to the bacterial ribosomal protein bL12 family. In terms of assembly, homodimer. Part of the ribosomal stalk of the 50S ribosomal subunit. Forms a multimeric L10(L12)X complex, where L10 forms an elongated spine to which 2 to 4 L12 dimers bind in a sequential fashion. Binds GTP-bound translation factors.

Functionally, forms part of the ribosomal stalk which helps the ribosome interact with GTP-bound translation factors. Is thus essential for accurate translation. The polypeptide is Large ribosomal subunit protein bL12 (Synechococcus sp. (strain CC9605)).